Consider the following 835-residue polypeptide: Phenylalanine--tRNA ligase beta subunit (835 aa).

Positions Gly44–Leu158 constitute a tRNA-binding domain. A B5 domain is found at Trp414–Ser493. Residues Asp471, Asp477, Glu480, and Glu481 each coordinate Mg(2+). The FDX-ACB domain maps to Ser741 to Arg834.

Belongs to the phenylalanyl-tRNA synthetase beta subunit family. Type 1 subfamily. In terms of assembly, tetramer of two alpha and two beta subunits. Requires Mg(2+) as cofactor.

It is found in the cytoplasm. It carries out the reaction tRNA(Phe) + L-phenylalanine + ATP = L-phenylalanyl-tRNA(Phe) + AMP + diphosphate + H(+). The sequence is that of Phenylalanine--tRNA ligase beta subunit from Mycobacterium leprae (strain TN).